The chain runs to 132 residues: Small ribosomal subunit protein uS8 (132 aa).

The protein belongs to the universal ribosomal protein uS8 family. In terms of assembly, part of the 30S ribosomal subunit. Contacts proteins S5 and S12.

Functionally, one of the primary rRNA binding proteins, it binds directly to 16S rRNA central domain where it helps coordinate assembly of the platform of the 30S subunit. This chain is Small ribosomal subunit protein uS8, found in Streptococcus sanguinis (strain SK36).